The primary structure comprises 354 residues: UDP-N-acetylglucosamine--N-acetylmuramyl-(pentapeptide) pyrophosphoryl-undecaprenol N-acetylglucosamine transferase (354 aa).

UDP-N-acetyl-alpha-D-glucosamine-binding positions include 11–13, Asn117, Arg160, Ser186, and Gln288; that span reads TGG.

The protein belongs to the glycosyltransferase 28 family. MurG subfamily.

It is found in the cell inner membrane. The enzyme catalyses di-trans,octa-cis-undecaprenyl diphospho-N-acetyl-alpha-D-muramoyl-L-alanyl-D-glutamyl-meso-2,6-diaminopimeloyl-D-alanyl-D-alanine + UDP-N-acetyl-alpha-D-glucosamine = di-trans,octa-cis-undecaprenyl diphospho-[N-acetyl-alpha-D-glucosaminyl-(1-&gt;4)]-N-acetyl-alpha-D-muramoyl-L-alanyl-D-glutamyl-meso-2,6-diaminopimeloyl-D-alanyl-D-alanine + UDP + H(+). It participates in cell wall biogenesis; peptidoglycan biosynthesis. Cell wall formation. Catalyzes the transfer of a GlcNAc subunit on undecaprenyl-pyrophosphoryl-MurNAc-pentapeptide (lipid intermediate I) to form undecaprenyl-pyrophosphoryl-MurNAc-(pentapeptide)GlcNAc (lipid intermediate II). This Rickettsia canadensis (strain McKiel) protein is UDP-N-acetylglucosamine--N-acetylmuramyl-(pentapeptide) pyrophosphoryl-undecaprenol N-acetylglucosamine transferase.